Here is a 360-residue protein sequence, read N- to C-terminus: Photosystem II protein D1 (360 aa).

A run of 3 helical transmembrane segments spans residues 29 to 46 (YIGWFGVVMIPTLLTATS), 118 to 133 (HFLLGVCCYIGREWEL), and 142 to 156 (WISVAFTAPVAAAAA). Residue H118 participates in chlorophyll a binding. Y126 is a pheophytin a binding site. [CaMn4O5] cluster is bound by residues D170 and E189. The helical transmembrane segment at 197 to 218 (FHQLGVAGVFGGSLFSAMHGSL) threads the bilayer. Position 198 (H198) interacts with chlorophyll a. A quinone is bound by residues H215 and 264-265 (SF). H215 contacts Fe cation. H272 is a Fe cation binding site. Residues 274–288 (FLGAWPVVGIWLTSM) traverse the membrane as a helical segment. Residues H332, E333, D342, and A344 each coordinate [CaMn4O5] cluster. The propeptide occupies 345-360 (SGDSCPVALVAPSING).

The protein belongs to the reaction center PufL/M/PsbA/D family. In terms of assembly, PSII is composed of 1 copy each of membrane proteins PsbA, PsbB, PsbC, PsbD, PsbE, PsbF, PsbH, PsbI, PsbJ, PsbK, PsbL, PsbM, PsbT, PsbX, PsbY, PsbZ, Psb30/Ycf12, at least 3 peripheral proteins of the oxygen-evolving complex and a large number of cofactors. It forms dimeric complexes. Requires The D1/D2 heterodimer binds P680, chlorophylls that are the primary electron donor of PSII, and subsequent electron acceptors. It shares a non-heme iron and each subunit binds pheophytin, quinone, additional chlorophylls, carotenoids and lipids. D1 provides most of the ligands for the Mn4-Ca-O5 cluster of the oxygen-evolving complex (OEC). There is also a Cl(-1) ion associated with D1 and D2, which is required for oxygen evolution. The PSII complex binds additional chlorophylls, carotenoids and specific lipids. as cofactor. In terms of processing, tyr-161 forms a radical intermediate that is referred to as redox-active TyrZ, YZ or Y-Z. Post-translationally, C-terminally processed by CTPA; processing is essential to allow assembly of the oxygen-evolving complex and thus photosynthetic growth.

The protein resides in the plastid. The protein localises to the chloroplast thylakoid membrane. The enzyme catalyses 2 a plastoquinone + 4 hnu + 2 H2O = 2 a plastoquinol + O2. In terms of biological role, photosystem II (PSII) is a light-driven water:plastoquinone oxidoreductase that uses light energy to abstract electrons from H(2)O, generating O(2) and a proton gradient subsequently used for ATP formation. It consists of a core antenna complex that captures photons, and an electron transfer chain that converts photonic excitation into a charge separation. The D1/D2 (PsbA/PsbD) reaction center heterodimer binds P680, the primary electron donor of PSII as well as several subsequent electron acceptors. The sequence is that of Photosystem II protein D1 from Palmaria palmata (Dulse).